Reading from the N-terminus, the 72-residue chain is Prokaryotic ubiquitin-like protein Pup (72 aa).

Residues 1–10 are compositionally biased toward gly residues; that stretch reads MATKDTGGGQ. Residues 1-45 form a disordered region; it reads MATKDTGGGQQKATRSTEEVEEQAQDAQASEDLAERQEKLSDDVD. A coiled-coil region spans residues 10 to 60; sequence QQKATRSTEEVEEQAQDAQASEDLAERQEKLSDDVDSVLDEIDDVLEENAE. Positions 28–66 are ARC ATPase binding; the sequence is QASEDLAERQEKLSDDVDSVLDEIDDVLEENAEDFVRSF. Positions 33–42 are enriched in basic and acidic residues; sequence LAERQEKLSD. A Deamidated glutamine modification is found at Gln-72. Gln-72 is covalently cross-linked (Isoglutamyl lysine isopeptide (Gln-Lys) (interchain with K-? in acceptor proteins)).

The protein belongs to the prokaryotic ubiquitin-like protein family. In terms of assembly, strongly interacts with the proteasome-associated ATPase ARC through a hydrophobic interface; the interacting region of Pup lies in its C-terminal half. There is one Pup binding site per ARC hexamer ring. Is modified by deamidation of its C-terminal glutamine to glutamate by the deamidase Dop, a prerequisite to the subsequent pupylation process.

It functions in the pathway protein degradation; proteasomal Pup-dependent pathway. Protein modifier that is covalently attached to lysine residues of substrate proteins, thereby targeting them for proteasomal degradation. The tagging system is termed pupylation. In Streptomyces griseus subsp. griseus (strain JCM 4626 / CBS 651.72 / NBRC 13350 / KCC S-0626 / ISP 5235), this protein is Prokaryotic ubiquitin-like protein Pup.